Reading from the N-terminus, the 405-residue chain is Probable tRNA sulfurtransferase (405 aa).

The THUMP domain occupies 75-183 (PRAAGAAADV…QNLAYVYLET (109 aa)). Residues 201–202 (LM), Lys-285, Gly-307, and Gln-316 contribute to the ATP site.

It belongs to the ThiI family.

It localises to the cytoplasm. The enzyme catalyses [ThiI sulfur-carrier protein]-S-sulfanyl-L-cysteine + a uridine in tRNA + 2 reduced [2Fe-2S]-[ferredoxin] + ATP + H(+) = [ThiI sulfur-carrier protein]-L-cysteine + a 4-thiouridine in tRNA + 2 oxidized [2Fe-2S]-[ferredoxin] + AMP + diphosphate. It catalyses the reaction [ThiS sulfur-carrier protein]-C-terminal Gly-Gly-AMP + S-sulfanyl-L-cysteinyl-[cysteine desulfurase] + AH2 = [ThiS sulfur-carrier protein]-C-terminal-Gly-aminoethanethioate + L-cysteinyl-[cysteine desulfurase] + A + AMP + 2 H(+). The protein operates within cofactor biosynthesis; thiamine diphosphate biosynthesis. Catalyzes the ATP-dependent transfer of a sulfur to tRNA to produce 4-thiouridine in position 8 of tRNAs, which functions as a near-UV photosensor. Also catalyzes the transfer of sulfur to the sulfur carrier protein ThiS, forming ThiS-thiocarboxylate. This is a step in the synthesis of thiazole, in the thiamine biosynthesis pathway. The sulfur is donated as persulfide by IscS. The protein is Probable tRNA sulfurtransferase of Methanosarcina mazei (strain ATCC BAA-159 / DSM 3647 / Goe1 / Go1 / JCM 11833 / OCM 88) (Methanosarcina frisia).